A 334-amino-acid polypeptide reads, in one-letter code: N-acetyl-gamma-glutamyl-phosphate reductase (334 aa).

Cysteine 154 is an active-site residue.

The protein belongs to the NAGSA dehydrogenase family. Type 1 subfamily.

The protein localises to the cytoplasm. The enzyme catalyses N-acetyl-L-glutamate 5-semialdehyde + phosphate + NADP(+) = N-acetyl-L-glutamyl 5-phosphate + NADPH + H(+). It functions in the pathway amino-acid biosynthesis; L-arginine biosynthesis; N(2)-acetyl-L-ornithine from L-glutamate: step 3/4. In terms of biological role, catalyzes the NADPH-dependent reduction of N-acetyl-5-glutamyl phosphate to yield N-acetyl-L-glutamate 5-semialdehyde. The chain is N-acetyl-gamma-glutamyl-phosphate reductase from Vibrio parahaemolyticus serotype O3:K6 (strain RIMD 2210633).